Here is a 192-residue protein sequence, read N- to C-terminus: Nucleotidase CA_C3379 (192 aa).

It belongs to the 5'(3')-deoxyribonucleotidase family. Mg(2+) is required as a cofactor.

It catalyses the reaction sugar phosphate + H2O = sugar + phosphate.. Its function is as follows. Catalyzes the dephosphorylation of nucleotide monophosphates and of different sugar phosphates in vitro. This chain is Nucleotidase CA_C3379, found in Clostridium acetobutylicum (strain ATCC 824 / DSM 792 / JCM 1419 / IAM 19013 / LMG 5710 / NBRC 13948 / NRRL B-527 / VKM B-1787 / 2291 / W).